Reading from the N-terminus, the 416-residue chain is Phosphoribosylamine--glycine ligase (416 aa).

Residues 105–310 enclose the ATP-grasp domain; that stretch reads KSFLKKYRIK…PLELILAATQ (206 aa). Position 131 to 192 (131 to 192) interacts with ATP; it reads IYSLTPPIVV…EEFLDGYELS (62 aa). Mg(2+) contacts are provided by E281 and N283.

This sequence belongs to the GARS family. Requires Mg(2+) as cofactor. The cofactor is Mn(2+).

It carries out the reaction 5-phospho-beta-D-ribosylamine + glycine + ATP = N(1)-(5-phospho-beta-D-ribosyl)glycinamide + ADP + phosphate + H(+). It functions in the pathway purine metabolism; IMP biosynthesis via de novo pathway; N(1)-(5-phospho-D-ribosyl)glycinamide from 5-phospho-alpha-D-ribose 1-diphosphate: step 2/2. The chain is Phosphoribosylamine--glycine ligase from Campylobacter jejuni subsp. jejuni serotype O:2 (strain ATCC 700819 / NCTC 11168).